We begin with the raw amino-acid sequence, 418 residues long: MLKKDMNIADFDPQLFQAIADETRRQEEHIELIASENYTSPRVLEAQGSQLTNKYAEGYPGKRYYGGCEHVDIAEELAISRAKELFGATYANVQPHSGSQANSAVFMALLQGGDTVLGMSLAHGGHLTHGSHVSFSGKLYNAVQYGIDEATGKIDYAEVERLAVEHKPKMIIAGFSAYSGIIDWGKFREIADKVGAYLFVDMAHVAGLVAAGIYPNPLPHAHVVTTTTHKTLAGPRGGLILSACDDEAIYKKLNSAVFPGGQGGPLMHVIAAKAVAFKEALEPEFTAYQEQVVVNAKAMAKTFIERGYDVVSGGTDNHLFLLDLISKDITGKDADAALGLANITVNKNSVPNDPRSPFVTSGLRIGSPAITRRGFKEEQSVELTNWMCDVLDDITDQGTIERVKNQVLELCARFPVYG.

Residues Leu-121 and 125 to 127 (GHL) each bind (6S)-5,6,7,8-tetrahydrofolate. Position 230 is an N6-(pyridoxal phosphate)lysine (Lys-230). 356–358 (SPF) is a (6S)-5,6,7,8-tetrahydrofolate binding site.

It belongs to the SHMT family. As to quaternary structure, homodimer. Pyridoxal 5'-phosphate is required as a cofactor.

It localises to the cytoplasm. It carries out the reaction (6R)-5,10-methylene-5,6,7,8-tetrahydrofolate + glycine + H2O = (6S)-5,6,7,8-tetrahydrofolate + L-serine. The protein operates within one-carbon metabolism; tetrahydrofolate interconversion. It participates in amino-acid biosynthesis; glycine biosynthesis; glycine from L-serine: step 1/1. Catalyzes the reversible interconversion of serine and glycine with tetrahydrofolate (THF) serving as the one-carbon carrier. This reaction serves as the major source of one-carbon groups required for the biosynthesis of purines, thymidylate, methionine, and other important biomolecules. Also exhibits THF-independent aldolase activity toward beta-hydroxyamino acids, producing glycine and aldehydes, via a retro-aldol mechanism. The polypeptide is Serine hydroxymethyltransferase (Shewanella sediminis (strain HAW-EB3)).